The primary structure comprises 73 residues: Maltose-binding periplasmic protein (73 aa).

The N-terminal stretch at 1-30 (MMTKTNLKMGARTLALSVLATLVLSASALA) is a signal peptide.

The protein belongs to the bacterial solute-binding protein 1 family.

It localises to the periplasm. Its function is as follows. Involved in the high-affinity maltose membrane transport system. Initial receptor for the active transport of and chemotaxis toward maltooligosaccharides. The sequence is that of Maltose-binding periplasmic protein (malE) from Photorhabdus luminescens (Xenorhabdus luminescens).